A 512-amino-acid polypeptide reads, in one-letter code: Na(+)/H(+) antiporter NhaB (512 aa).

Transmembrane regions (helical) follow at residues 28–48, 52–72, 97–117, 144–164, 201–221, 237–257, 296–330, 347–367, 390–410, 446–466, and 474–494; these read FLIINPLVFIFQPFMAGWLLV, IFTLAMALKCYPLLPGGLLAI, LLLMFMVAGIYFMKQLLLFIF, FLDALTVVAVVISVAIGFYGI, LMMHAGVGTALGGVMTMVGEP, FFLRVAPVSVPVFICGMLTCF, LALIAQGIIGAWLIFALAFHLAEVGLIGLSVIILA, TEALPFTALLAVFFAIVAVII, LFYLFNGLLSSISDNVFVGSV, ATPNGQAAFLFLLTSALAPLI, and VWMALPYTVVLTLVGLLCVKF.

It belongs to the NhaB Na(+)/H(+) (TC 2.A.34) antiporter family.

The protein resides in the cell inner membrane. The catalysed reaction is 2 Na(+)(in) + 3 H(+)(out) = 2 Na(+)(out) + 3 H(+)(in). In terms of biological role, na(+)/H(+) antiporter that extrudes sodium in exchange for external protons. In Enterobacter sp. (strain 638), this protein is Na(+)/H(+) antiporter NhaB.